The primary structure comprises 271 residues: Undecaprenyl-diphosphatase (271 aa).

Helical transmembrane passes span 5–25 (LLIK…LPIS), 43–63 (FATM…VYYF), 80–100 (GFNL…IGIL), 109–129 (LFSP…MIVI), 145–165 (VSTS…FPGM), 186–206 (AEFS…FELV), 215–235 (LEWE…LIVV), and 246–266 (VLKP…FLIA).

This sequence belongs to the UppP family.

It localises to the cell membrane. It catalyses the reaction di-trans,octa-cis-undecaprenyl diphosphate + H2O = di-trans,octa-cis-undecaprenyl phosphate + phosphate + H(+). In terms of biological role, catalyzes the dephosphorylation of undecaprenyl diphosphate (UPP). Confers resistance to bacitracin. This is Undecaprenyl-diphosphatase from Caldanaerobacter subterraneus subsp. tengcongensis (strain DSM 15242 / JCM 11007 / NBRC 100824 / MB4) (Thermoanaerobacter tengcongensis).